The sequence spans 116 residues: Protein Rev (116 aa).

Phosphoserine; by host CK2 is present on serine 5. The homomultimerization stretch occupies residues 18–26; it reads IIRLLYQSN. A disordered region spans residues 27-49; that stretch reads PYPEPAGTRQAQRNRRRRWRARQ. The Nuclear localization signal and RNA-binding (RRE) signature appears at 34–50; sequence TRQAQRNRRRRWRARQR. Basic residues predominate over residues 38 to 49; that stretch reads QRNRRRRWRARQ. Positions 73–84 match the Nuclear export signal and binding to XPO1 motif; it reads LQLPPLERLTLD. Residues 86 to 116 are disordered; the sequence is SEDCGTSGEKGVGSPQTSGESPAVLGTGAKE. Phosphoserine; by host occurs at positions 92 and 99.

It belongs to the HIV-1 REV protein family. As to quaternary structure, homomultimer; when bound to the RRE. Multimeric assembly is essential for activity and may involve XPO1. Binds to human KPNB1, XPO1, TNPO1, RANBP5 and IPO7. Interacts with the viral Integrase. Interacts with human KHDRBS1. Interacts with human NAP1; this interaction decreases Rev multimerization and stimulates its activity. Interacts with human DEAD-box helicases DDX3 and DDX24; these interactions may serve for viral RNA export to the cytoplasm and packaging, respectively. Interacts with human PSIP1; this interaction may inhibit HIV-1 DNA integration by promoting dissociation of the Integrase-LEDGF/p75 complex. In terms of processing, asymmetrically arginine dimethylated at one site by host PRMT6. Methylation impairs the RNA-binding activity and export of viral RNA from the nucleus to the cytoplasm. Phosphorylated by protein kinase CK2. Presence of, and maybe binding to the N-terminus of the regulatory beta subunit of CK2 is necessary for CK2-mediated Rev's phosphorylation.

Its subcellular location is the host nucleus. The protein resides in the host nucleolus. The protein localises to the host cytoplasm. Escorts unspliced or incompletely spliced viral pre-mRNAs (late transcripts) out of the nucleus of infected cells. These pre-mRNAs carry a recognition sequence called Rev responsive element (RRE) located in the env gene, that is not present in fully spliced viral mRNAs (early transcripts). This function is essential since most viral proteins are translated from unspliced or partially spliced pre-mRNAs which cannot exit the nucleus by the pathway used by fully processed cellular mRNAs. Rev itself is translated from a fully spliced mRNA that readily exits the nucleus. Rev's nuclear localization signal (NLS) binds directly to KPNB1/Importin beta-1 without previous binding to KPNA1/Importin alpha-1. KPNB1 binds to the GDP bound form of RAN (Ran-GDP) and targets Rev to the nucleus. In the nucleus, the conversion from Ran-GDP to Ran-GTP dissociates Rev from KPNB1 and allows Rev's binding to the RRE in viral pre-mRNAs. Rev multimerization on the RRE via cooperative assembly exposes its nuclear export signal (NES) to the surface. Rev can then form a complex with XPO1/CRM1 and Ran-GTP, leading to nuclear export of the complex. Conversion from Ran-GTP to Ran-GDP mediates dissociation of the Rev/RRE/XPO1/RAN complex, so that Rev can return to the nucleus for a subsequent round of export. Beside KPNB1, also seems to interact with TNPO1/Transportin-1, RANBP5/IPO5 and IPO7/RANBP7 for nuclear import. The nucleoporin-like HRB/RIP is an essential cofactor that probably indirectly interacts with Rev to release HIV RNAs from the perinuclear region to the cytoplasm. This is Protein Rev from Human immunodeficiency virus type 1 group M subtype H (isolate VI991) (HIV-1).